The sequence spans 294 residues: Elongation factor Ts (294 aa).

Residues 79–82 (TDFV) form an involved in Mg(2+) ion dislocation from EF-Tu region.

This sequence belongs to the EF-Ts family.

The protein localises to the cytoplasm. Its function is as follows. Associates with the EF-Tu.GDP complex and induces the exchange of GDP to GTP. It remains bound to the aminoacyl-tRNA.EF-Tu.GTP complex up to the GTP hydrolysis stage on the ribosome. The protein is Elongation factor Ts of Oceanobacillus iheyensis (strain DSM 14371 / CIP 107618 / JCM 11309 / KCTC 3954 / HTE831).